A 117-amino-acid polypeptide reads, in one-letter code: UPF0342 protein lmo2223 (117 aa).

Belongs to the UPF0342 family.

The protein is UPF0342 protein lmo2223 of Listeria monocytogenes serovar 1/2a (strain ATCC BAA-679 / EGD-e).